A 1066-amino-acid chain; its full sequence is Ubiquitin conjugation factor E4 A (1066 aa).

A disordered region spans residues 35–57; it reads QLKQQSDELPASPDDSDNSVSES. Lysine 386 bears the N6-acetyllysine mark. A U-box domain is found at 987 to 1061; the sequence is DACDEFLDPI…QRWLAERKQQ (75 aa).

The protein belongs to the ubiquitin conjugation factor E4 family.

It localises to the cytoplasm. The enzyme catalyses S-ubiquitinyl-[E2 ubiquitin-conjugating enzyme]-L-cysteine + [acceptor protein]-L-lysine = [E2 ubiquitin-conjugating enzyme]-L-cysteine + N(6)-ubiquitinyl-[acceptor protein]-L-lysine.. It participates in protein modification; protein ubiquitination. In terms of biological role, ubiquitin-protein ligase that probably functions as an E3 ligase in conjunction with specific E1 and E2 ligases. May also function as an E4 ligase mediating the assembly of polyubiquitin chains on substrates ubiquitinated by another E3 ubiquitin ligase. Mediates 'Lys-48'-linked polyubiquitination of substrates. This Rattus norvegicus (Rat) protein is Ubiquitin conjugation factor E4 A.